Here is a 368-residue protein sequence, read N- to C-terminus: DNA replication and repair protein RecF (368 aa).

Position 30–37 (30–37) interacts with ATP; sequence GRNGSGKT.

The protein belongs to the RecF family.

The protein localises to the cytoplasm. Its function is as follows. The RecF protein is involved in DNA metabolism; it is required for DNA replication and normal SOS inducibility. RecF binds preferentially to single-stranded, linear DNA. It also seems to bind ATP. This chain is DNA replication and repair protein RecF, found in Chlorobaculum parvum (strain DSM 263 / NCIMB 8327) (Chlorobium vibrioforme subsp. thiosulfatophilum).